The primary structure comprises 442 residues: MTPYSSAADLGSTVSPLEGLSSVITKNTSIVSQYLQANNLPQPSPEANGPVVVLPSDAPQDVQQARQQLIAASLEIFQLAIGPSEFLPHLATNFQYISCLTWLAHYDIFHLVPRDKNISYADLARATGVPEQRLKSILRMAMTSSLFREHPNGTDVGHSAVSALLASDDDAYSYATYMCSKTAPMAMSMTEAHKRWGASTRTNETAYNVAFNTELPLFDDLAQNKARMGEFARYMRSVRSSETVALKHLVSGVDWESIPAGGMLVDVGGSTGGAAIALAQAYPHIRFTIQDLPENVETGEKAAAASLPADIASRLTFQAHDFTLPQPVRAADAYLLRMILHDWPDEQAVKILRNIVTAMEETKSRLFIMDTVLPKPGSVPVSVERIARARDLTMIQSFNSKERELDEWKELITAADPRLQLIAVTQPLGSAMSILEIQLSAK.

Aspartate 291 serves as a coordination point for S-adenosyl-L-methionine. The active-site Proton acceptor is histidine 341.

Belongs to the class I-like SAM-binding methyltransferase superfamily. Cation-independent O-methyltransferase family.

It participates in pigment biosynthesis. Its pathway is secondary metabolite biosynthesis. O-methyltransferase; part of the gene cluster that mediates the biosynthesis of pleosporalin A, ascomycone A, as well as a third cryptic naphthoquinone derived pigment, all responsible for the coloration of conidia. Specifically methylates position C-6 of the pgmA product 3-acetonyl-1,6,8-trihydroxy-2-naphthaldehyde to yield fusarubinaldehyde. The pathway begins with the biosynthesis of the cyclized heptaketide 3-acetonyl-1,6,8-trihydroxy-2-naphthaldehyde by the NR-PKS pgmA. The C-6 hydroxyl group is further methylated by the O-methyltransferase pgmB to yield fusarubinaldehyde which is in turn oxidized by the cytochrome P450 monooxygenase pgmC at C-9. The C-1 hydroxyl group is then methylated spontaneously. Although pgmE, pgmD and pgmH are essential for the production of pleosporalin A, it is not the case for the 2 other final products and it remains difficult to assign a specific function to each enzyme. PgmF and pgmG seem not to be involved in pigment biosynthesis although they were regulated by the cluster-specific transcription factor pgmR. In Aspergillus terreus, this protein is O-methyltransferase pgmB.